The chain runs to 559 residues: Asparagine--tRNA ligase, cytoplasmic (559 aa).

Ser-72 is modified (phosphoserine). N6-acetyllysine is present on residues Lys-255 and Lys-501.

Belongs to the class-II aminoacyl-tRNA synthetase family.

The protein resides in the cytoplasm. The catalysed reaction is tRNA(Asn) + L-asparagine + ATP = L-asparaginyl-tRNA(Asn) + AMP + diphosphate + H(+). In Bos taurus (Bovine), this protein is Asparagine--tRNA ligase, cytoplasmic (NARS).